Here is a 163-residue protein sequence, read N- to C-terminus: uncharacterized protein (163 aa).

The span at 1–10 (MTHPLPHDSH) shows a compositional bias: basic and acidic residues. Disordered regions lie at residues 1–21 (MTHP…VNKS) and 71–112 (SKQP…EQRR). Over residues 90-105 (PASSLQDHSRLTSLSR) the composition is skewed to polar residues.

This is an uncharacterized protein from Homo sapiens (Human).